A 241-amino-acid polypeptide reads, in one-letter code: N-acetylmuramoyl-L-alanine amidase Rv3717 (241 aa).

Residues 1–24 form the signal peptide; that stretch reads MIVGVLVAAATPIISSASATPANI. Residues 29-230 form the MurNAc-LAA domain; sequence VFIDPGHNGA…KYANALVRGV (202 aa). H35 serves as a coordination point for Zn(2+). A disordered region spans residues 45-69; sequence RQVPTGRGGTKNCQASGTSTNSGYP. The span at 55-67 shows a compositional bias: polar residues; sequence KNCQASGTSTNSG. An intrachain disulfide couples C57 to C105. Residues E70 and H125 each contribute to the Zn(2+) site. The active-site Proton donor/acceptor is E200.

The protein belongs to the N-acetylmuramoyl-L-alanine amidase 3 family. Monomer. Zn(2+) is required as a cofactor.

It localises to the periplasm. The enzyme catalyses Hydrolyzes the link between N-acetylmuramoyl residues and L-amino acid residues in certain cell-wall glycopeptides.. The protein operates within cell wall degradation; peptidoglycan degradation. With respect to regulation, the structure reveals a short flexible hairpin turn that partially occludes the active site and may be involved in autoregulation. In terms of biological role, cell-wall hydrolase that hydrolyzes the amide bond between N-acetylmuramic acid and L-alanine in cell-wall glycopeptides. Is able to hydrolyze the cell walls of several bacterial species (i.e. Paenibacillus sp., B.avium, E.coli DH5alpha, E.aerogenes, L.acidophilus, B.thuringiensis, B.pumilus, B.subtilis and E.coli W3110), thereby showing that it is a cell-wall hydrolase with broad-spectrum activity. May have a role in peptidoglycan fragment recycling. The polypeptide is N-acetylmuramoyl-L-alanine amidase Rv3717 (Mycobacterium tuberculosis (strain ATCC 25618 / H37Rv)).